A 386-amino-acid chain; its full sequence is O-methyltransferase 12 (386 aa).

S-adenosyl-L-homocysteine-binding residues include serine 207, glycine 231, aspartate 254, aspartate 274, and lysine 288. S-adenosyl-L-methionine is bound at residue aspartate 254. Histidine 292 functions as the Proton acceptor in the catalytic mechanism.

It belongs to the class I-like SAM-binding methyltransferase superfamily. Cation-independent O-methyltransferase family. In terms of assembly, homodimer. Expressed at high levels in all tissues.

The catalysed reaction is 4-hydroxy-3,5-dimethoxyphenethylamine + S-adenosyl-L-methionine = mescaline + S-adenosyl-L-homocysteine + H(+). The enzyme catalyses dopamine + S-adenosyl-L-methionine = 4-methoxytyramine + S-adenosyl-L-homocysteine + H(+). The protein operates within aromatic compound metabolism. Its pathway is alkaloid biosynthesis. In terms of biological role, O-methyltransferase participating in the biosynthesis of natural products derived from phenylethylamine, including mescaline, a natural hallucinogen potentially used in psychotherapeutic treatments. Catalyzes the O-methylation of dopamine, 4-hydroxy-3,5-dimethoxyphenethylamine, 4,5-dihydroxy-3-methoxyphenethylamine and N-methyl-4,5-dihydroxy-3-methoxyphenethylamine. Also involved in the conversion of N-methyl-4-hydroxy-3,5-dimethoxyphenethylamine to N-methylmescaline. The chain is O-methyltransferase 12 from Lophophora williamsii (Peyote).